The primary structure comprises 363 residues: GDSL esterase/lipase At1g29670 (363 aa).

Positions Met-1 to Ala-24 are cleaved as a signal peptide. Ser-39 (nucleophile) is an active-site residue. Active-site residues include Asp-327 and His-330.

It belongs to the 'GDSL' lipolytic enzyme family.

It localises to the secreted. This is GDSL esterase/lipase At1g29670 from Arabidopsis thaliana (Mouse-ear cress).